A 513-amino-acid chain; its full sequence is Maturase K (513 aa).

This sequence belongs to the intron maturase 2 family. MatK subfamily.

The protein localises to the plastid. Its subcellular location is the chloroplast. Usually encoded in the trnK tRNA gene intron. Probably assists in splicing its own and other chloroplast group II introns. This is Maturase K from Typha latifolia (Bulrush).